The primary structure comprises 343 residues: N-acetyl-gamma-glutamyl-phosphate reductase (343 aa).

Cys-147 is an active-site residue.

This sequence belongs to the NAGSA dehydrogenase family. Type 1 subfamily.

The protein localises to the cytoplasm. It carries out the reaction N-acetyl-L-glutamate 5-semialdehyde + phosphate + NADP(+) = N-acetyl-L-glutamyl 5-phosphate + NADPH + H(+). It functions in the pathway amino-acid biosynthesis; L-arginine biosynthesis; N(2)-acetyl-L-ornithine from L-glutamate: step 3/4. Functionally, catalyzes the NADPH-dependent reduction of N-acetyl-5-glutamyl phosphate to yield N-acetyl-L-glutamate 5-semialdehyde. In Listeria monocytogenes serovar 1/2a (strain ATCC BAA-679 / EGD-e), this protein is N-acetyl-gamma-glutamyl-phosphate reductase.